Here is a 329-residue protein sequence, read N- to C-terminus: Tyrosine recombinase XerC 1 (329 aa).

The Core-binding (CB) domain maps to 14 to 101 (APPHPQIGAY…AWRGWYQWLA (88 aa)). The Tyr recombinase domain occupies 123-320 (RLPKALSVEQ…DFQHLAKIYD (198 aa)). Catalysis depends on residues arginine 163, lysine 198, histidine 272, arginine 275, and histidine 298. Tyrosine 307 functions as the O-(3'-phospho-DNA)-tyrosine intermediate in the catalytic mechanism.

This sequence belongs to the 'phage' integrase family. XerC subfamily. Forms a cyclic heterotetrameric complex composed of two molecules of XerC and two molecules of XerD.

The protein resides in the cytoplasm. Site-specific tyrosine recombinase, which acts by catalyzing the cutting and rejoining of the recombining DNA molecules. The XerC-XerD complex is essential to convert dimers of the bacterial chromosome into monomers to permit their segregation at cell division. It also contributes to the segregational stability of plasmids. The sequence is that of Tyrosine recombinase XerC 1 (xerC1) from Ralstonia nicotianae (strain ATCC BAA-1114 / GMI1000) (Ralstonia solanacearum).